The primary structure comprises 362 residues: Spermidine/putrescine import ATP-binding protein PotA (362 aa).

The 231-residue stretch at 6 to 236 folds into the ABC transporter domain; that stretch reads VELKHVGKRY…PVNHFVADFI (231 aa). An ATP-binding site is contributed by 38–45; it reads GPSGSGKT.

Belongs to the ABC transporter superfamily. Spermidine/putrescine importer (TC 3.A.1.11.1) family. In terms of assembly, the complex is composed of two ATP-binding proteins (PotA), two transmembrane proteins (PotB and PotC) and a solute-binding protein (PotD).

It localises to the cell membrane. It carries out the reaction ATP + H2O + polyamine-[polyamine-binding protein]Side 1 = ADP + phosphate + polyamineSide 2 + [polyamine-binding protein]Side 1.. In terms of biological role, part of the ABC transporter complex PotABCD involved in spermidine/putrescine import. Responsible for energy coupling to the transport system. The sequence is that of Spermidine/putrescine import ATP-binding protein PotA from Lacticaseibacillus paracasei (strain ATCC 334 / BCRC 17002 / CCUG 31169 / CIP 107868 / KCTC 3260 / NRRL B-441) (Lactobacillus paracasei).